A 554-amino-acid polypeptide reads, in one-letter code: Glucose-6-phosphate isomerase 2 (554 aa).

The active-site Proton donor is Glu359. Active-site residues include His390 and Lys518.

It belongs to the GPI family.

Its subcellular location is the cytoplasm. It carries out the reaction alpha-D-glucose 6-phosphate = beta-D-fructose 6-phosphate. Its pathway is carbohydrate biosynthesis; gluconeogenesis. It participates in carbohydrate degradation; glycolysis; D-glyceraldehyde 3-phosphate and glycerone phosphate from D-glucose: step 2/4. In terms of biological role, catalyzes the reversible isomerization of glucose-6-phosphate to fructose-6-phosphate. The sequence is that of Glucose-6-phosphate isomerase 2 from Pseudomonas putida (strain ATCC 47054 / DSM 6125 / CFBP 8728 / NCIMB 11950 / KT2440).